A 471-amino-acid polypeptide reads, in one-letter code: FAD-dependent monooxygenase andE (471 aa).

FAD is bound by residues E35, G49, and R108. Residue Y216 is part of the active site. FAD is bound by residues D308 and A321. 2 helical membrane-spanning segments follow: residues 403–423 (LANISSMLIANGEIIQYLPFP) and 443–463 (TPFALFSAILLVQHVVPLLGL).

This sequence belongs to the paxM FAD-dependent monooxygenase family. The cofactor is FAD.

The protein localises to the membrane. It participates in secondary metabolite biosynthesis; terpenoid biosynthesis. Functionally, FAD-dependent monooxygenase; part of the gene cluster that mediates the biosynthesis of anditomin, a fungal meroterpenoid. The first step of the pathway is the synthesis of 3,5-dimethylorsellinic acid (DMOA) by the polyketide synthase andM. DMOA is then converted to the phthalide compound 5,7-dihydroxy-4,6-dimethylphthalide (DHDMP) by the cytochrome P450 monooxygenase andK, which is further prenylated by the prenyltransferase andD to yield farnesyl-DHDMP. Further epoxidation by the FAD-dependent monooxygenase andE leads to epoxyfarnesyl-DHDMP. The next step involves the terpene cyclase andB that converts epoxyfarnesyl-DHDMP into preandiloid A through opening of the epoxide ring followed by the cyclization of the farnesyl moiety. Preandiloid A is in turn oxidized at the C-3 hydroxyl group to yield preandiloid B by the dehydrogenase andC. The dioxygenase andA is solely responsible for the dehydrogenation of preandiloid B leading to the enone preandiloid C, as well as for the intriguing structural rearrangement to generate the bicyclo[2.2.2]octane core, transforming preandiloid C into andiconin. FAD-binding monooxygenase andJ then produces andilesin D which is reduced by dehydrogenase andI to yield andilesin A. Action of acetyltransferase andG followed by a spontaneous acetate elimination leads then to andilesin B, which is in turn substrate of the short chain dehydrogenase andH to yield andilesin C. Finally, the dioxygenase andF catalyzes the transformation of andilesin C to anditomin. This chain is FAD-dependent monooxygenase andE, found in Emericella variicolor (Aspergillus stellatus).